We begin with the raw amino-acid sequence, 1058 residues long: Isoleucine--tRNA ligase (1058 aa).

The 'HIGH' region signature appears at 48-58 (PYTTGHIHLGT). A 'KMSKS' region motif is present at residues 596 to 600 (KMSKS). ATP is bound at residue K599.

Belongs to the class-I aminoacyl-tRNA synthetase family. IleS type 2 subfamily. Monomer. Zn(2+) serves as cofactor.

It is found in the cytoplasm. It carries out the reaction tRNA(Ile) + L-isoleucine + ATP = L-isoleucyl-tRNA(Ile) + AMP + diphosphate. Catalyzes the attachment of isoleucine to tRNA(Ile). As IleRS can inadvertently accommodate and process structurally similar amino acids such as valine, to avoid such errors it has two additional distinct tRNA(Ile)-dependent editing activities. One activity is designated as 'pretransfer' editing and involves the hydrolysis of activated Val-AMP. The other activity is designated 'posttransfer' editing and involves deacylation of mischarged Val-tRNA(Ile). This is Isoleucine--tRNA ligase from Methanosarcina mazei (strain ATCC BAA-159 / DSM 3647 / Goe1 / Go1 / JCM 11833 / OCM 88) (Methanosarcina frisia).